The chain runs to 313 residues: Non-functional target of rapamycin complex subunit LST8-2 (313 aa).

WD repeat units lie at residues 1-35, 38-76, 82-121, 123-162, 166-205, 215-255, and 258-297; these read MFEN…CYFS, YPDL…PHIP, SHTK…CQRE, RSVS…CSCE, EVGT…QTMT, AHNS…LEKV, and GHER…EEMV.

This sequence belongs to the WD repeat LST8 family.

Its function is as follows. Probable non-functional protein. This is Non-functional target of rapamycin complex subunit LST8-2 from Arabidopsis thaliana (Mouse-ear cress).